The following is a 265-amino-acid chain: (-)-isopiperitenol/(-)-carveol dehydrogenase, mitochondrial (265 aa).

A mitochondrion-targeting transit peptide spans 1 to 30; it reads MASVKKLAGKVAIVTGGASGIGEVTARLFA. 13-38 provides a ligand contact to NAD(+); it reads IVTGGASGIGEVTARLFAERGARAVV. Residue Ser147 coordinates substrate. Tyr160 (proton acceptor) is an active-site residue.

It belongs to the short-chain dehydrogenases/reductases (SDR) family. In terms of assembly, homodimer and homotetramer. Peltate glandular trichomes.

Its subcellular location is the mitochondrion. It carries out the reaction (1S,6R)-isopiperitenol + NAD(+) = (6R)-isopiperitenone + NADH + H(+). The enzyme catalyses (1S,5R)-carveol + NADP(+) = (R)-carvone + NADPH + H(+). In terms of biological role, involved in the biosynthesis of menthol and related monoterpenes in leaves. Can use (-)-trans-carveol and, with a lower relative velocity, (-)-trans-isopiperitenol, (+)-neomenthol, (+)-neoisomenthol and (-)-cis-isopiperitenol as substrates, but not (-)-cis-carvenol, (-)-menthol, (+)-isomenthol, 7-hydroxy-limonene, (-)-isopiperitenone or (-)-carvone. The chain is (-)-isopiperitenol/(-)-carveol dehydrogenase, mitochondrial from Mentha piperita (Peppermint).